The sequence spans 148 residues: UPF0178 protein BH16190 (148 aa).

It belongs to the UPF0178 family.

This is UPF0178 protein BH16190 from Bartonella henselae (strain ATCC 49882 / DSM 28221 / CCUG 30454 / Houston 1) (Rochalimaea henselae).